The primary structure comprises 356 residues: Cyclin-D4-1 (356 aa).

It belongs to the cyclin family. Cyclin D subfamily.

This is Cyclin-D4-1 (CYCD4-1) from Oryza sativa subsp. japonica (Rice).